The sequence spans 1157 residues: MTLQIIAGRSGTGKTTHLMDEVGEKIKQNSKTYIFIVPDQMTFQMETSFLNKENLAGMLGTQIFSFSRLAWKILQETGGLSKTFLSQTGIEMVIRKAALDQKDKLKIFSRATSRKGFYSELANLFKEMKQEEVSIEDMVQSATNLSTSVNNKVHDISLIYQKYEELLADKFLENEDYLRLLAEKIADSDYLNRTEIVIDGFTSFSKQELTVIGELMRKCDKVTVSLTLNVPEIQHGLDEYSMFKASTEAYYALLELAKLNGTQVEENKFFLENKRAKTESLAFLANTWGHNKFMSFKNEPQNLKIHQANNRRAEIEGIAREIRQLVLNGYRYRDIAILTRNLGDYDVLCETVMEAYNIPTFIDKKRAMAKHPFIEFIRSSLDAILFNWKYEPIFQAVKTEFFFDITEKSSLNRRKADILENYVLENGIQNKWKWEKEGDWVYRKIRGLSTNVLPQTDEEIHMQSIINEMRSLIVNPLATLELNLRKAKTGMEFALALYHYLEQVNAVERLESWRQRAEEQGYLELAREHEQAWSSISALLDEFVEVLGEETLDLDSFTEIIGTGLDALEFSLLPPSLDQVVLSDMENAKLLDMKVIFAIGMNDGVMPLRQKDKGIFSDQDRDALRAEDSKLKPSAKNNIGEEDLLAYKIISLPSDKLFLSYPAADEEGKVLSESNYLRKIKGQFNELNESVYLTDPSLLSDAEQSSYIRSKQATLGLLTSQLQMYKRGYTLSSVWWDAYNSYFENEKESIMAKQVLSSLYYENKTKPLQETTAKNLFGETIHASVSRMEKFFSCEFQHYAQYGLKLEERGHFQLQAVDMGEIFHGAMEWISAELKRNNLDWGNLTEEECKQMAKLAMTFLAPKIQHEILLSSKRMEYIQYKLLQIITRATTVLNEQAKSSAFRPVGLEVDFGLKGDIPPLKIPLQSDSELLLQGRIDRIDMAEQDDRTFLRIIDYKSSSHDLALTEVYYGLALQMLTYLDIVVTNAQKMIGKTAEPAGVLYFHMHNQYVQAEKELSDEAIAKELQKSSKMKGLILSDPVAVSLMDTTLEKGKASTIIPAEIKQNGELSARSRTATRAEFDKMRQFVRHKYQEAGNKILDGAVSINPYKLKERTPCQFCSFRSFCGFDPSLTSNQYRHLANEKAETILTKMDMEGGTQ.

A UvrD-like helicase ATP-binding domain is found at 1–278 (MTLQIIAGRS…FFLENKRAKT (278 aa)). 8–15 (GRSGTGKT) serves as a coordination point for ATP. The region spanning 272-590 (ENKRAKTESL…VLSDMENAKL (319 aa)) is the UvrD-like helicase C-terminal domain. 4 residues coordinate [4Fe-4S] cluster: Cys-794, Cys-1115, Cys-1118, and Cys-1124.

The protein belongs to the helicase family. AddB/RexB type 1 subfamily. Heterodimer of AddA and AddB. Requires Mg(2+) as cofactor. [4Fe-4S] cluster serves as cofactor.

Its function is as follows. The heterodimer acts as both an ATP-dependent DNA helicase and an ATP-dependent, dual-direction single-stranded exonuclease. Recognizes the chi site generating a DNA molecule suitable for the initiation of homologous recombination. The AddB subunit has 5' -&gt; 3' nuclease activity but not helicase activity. In Listeria monocytogenes serotype 4a (strain HCC23), this protein is ATP-dependent helicase/deoxyribonuclease subunit B.